Reading from the N-terminus, the 343-residue chain is Dihydroorotase (343 aa).

His-13 and His-15 together coordinate Zn(2+). Residues 15–17 (HLR) and Asn-41 each bind substrate. Zn(2+) is bound by residues Lys-99, His-136, and His-174. Position 99 is an N6-carboxylysine (Lys-99). His-136 contacts substrate. Leu-219 contacts substrate. Residue Asp-247 coordinates Zn(2+). Asp-247 is an active-site residue. Residues His-251 and Ala-263 each contribute to the substrate site.

It belongs to the metallo-dependent hydrolases superfamily. DHOase family. Class II DHOase subfamily. As to quaternary structure, homodimer. The cofactor is Zn(2+).

It catalyses the reaction (S)-dihydroorotate + H2O = N-carbamoyl-L-aspartate + H(+). It participates in pyrimidine metabolism; UMP biosynthesis via de novo pathway; (S)-dihydroorotate from bicarbonate: step 3/3. Functionally, catalyzes the reversible cyclization of carbamoyl aspartate to dihydroorotate. This chain is Dihydroorotase, found in Shewanella baltica (strain OS195).